Here is a 204-residue protein sequence, read N- to C-terminus: 3-isopropylmalate dehydratase small subunit (204 aa).

It belongs to the LeuD family. LeuD type 1 subfamily. In terms of assembly, heterodimer of LeuC and LeuD.

It carries out the reaction (2R,3S)-3-isopropylmalate = (2S)-2-isopropylmalate. It participates in amino-acid biosynthesis; L-leucine biosynthesis; L-leucine from 3-methyl-2-oxobutanoate: step 2/4. Its function is as follows. Catalyzes the isomerization between 2-isopropylmalate and 3-isopropylmalate, via the formation of 2-isopropylmaleate. The sequence is that of 3-isopropylmalate dehydratase small subunit from Clavibacter michiganensis subsp. michiganensis (strain NCPPB 382).